Here is a 124-residue protein sequence, read N- to C-terminus: UPF0231 protein Sama_0645 (124 aa).

This sequence belongs to the UPF0231 family.

The polypeptide is UPF0231 protein Sama_0645 (Shewanella amazonensis (strain ATCC BAA-1098 / SB2B)).